The following is a 695-amino-acid chain: Putative ATP-dependent DNA helicase R568 (695 aa).

The region spanning 86–499 (KFSEEQIKYI…FRNEEIFDSN (414 aa)) is the UvrD-like helicase ATP-binding domain. Residue 107–114 (ACAGSGKT) coordinates ATP.

It belongs to the helicase family. UvrD subfamily.

The enzyme catalyses Couples ATP hydrolysis with the unwinding of duplex DNA by translocating in the 3'-5' direction.. It carries out the reaction ATP + H2O = ADP + phosphate + H(+). Functionally, ATP-dependent DNA helicase. The protein is Putative ATP-dependent DNA helicase R568 of Acanthamoeba polyphaga mimivirus (APMV).